The following is a 203-amino-acid chain: uncharacterized protein (203 aa).

Residues methionine 1–phenylalanine 20 form the signal peptide.

This is an uncharacterized protein from Pasteurella multocida (strain Pm70).